Consider the following 247-residue polypeptide: Carboxy-S-adenosyl-L-methionine synthase (247 aa).

Residues Tyr-40, 65–67 (GAS), 90–91 (DN), 122–123 (DI), Asn-137, and Arg-204 each bind S-adenosyl-L-methionine.

Belongs to the class I-like SAM-binding methyltransferase superfamily. Cx-SAM synthase family. In terms of assembly, homodimer.

It catalyses the reaction prephenate + S-adenosyl-L-methionine = carboxy-S-adenosyl-L-methionine + 3-phenylpyruvate + H2O. Its function is as follows. Catalyzes the conversion of S-adenosyl-L-methionine (SAM) to carboxy-S-adenosyl-L-methionine (Cx-SAM). In Pseudomonas putida (strain W619), this protein is Carboxy-S-adenosyl-L-methionine synthase.